The primary structure comprises 104 residues: Large ribosomal subunit protein uL24 (104 aa).

Belongs to the universal ribosomal protein uL24 family. Part of the 50S ribosomal subunit.

One of two assembly initiator proteins, it binds directly to the 5'-end of the 23S rRNA, where it nucleates assembly of the 50S subunit. Its function is as follows. One of the proteins that surrounds the polypeptide exit tunnel on the outside of the subunit. The sequence is that of Large ribosomal subunit protein uL24 from Nitrobacter hamburgensis (strain DSM 10229 / NCIMB 13809 / X14).